Here is a 366-residue protein sequence, read N- to C-terminus: Mitochondrial substrate carrier family protein H (366 aa).

Residues 1 to 25 show a composition bias toward low complexity; that stretch reads MLSNSVNNNNNNNNINNSNSNNNDS. The interval 1-26 is disordered; that stretch reads MLSNSVNNNNNNNNINNSNSNNNDSN. Solcar repeat units follow at residues 29–121, 132–243, and 259–360; these read KNVK…LKEY, NIYT…LKNK, and SPFF…IKQS. Helical transmembrane passes span 35–55, 96–112, 133–151, 175–192, 262–282, and 340–357; these read MVAS…LDVV, GVTP…TIYF, IYTV…SASV, VAMA…IPLS, FINF…TTPI, and VAKV…FEYI.

Belongs to the mitochondrial carrier (TC 2.A.29) family.

It localises to the mitochondrion inner membrane. Mitochondrial transporter required for glutathione import into mitochondria. The protein is Mitochondrial substrate carrier family protein H of Dictyostelium discoideum (Social amoeba).